Reading from the N-terminus, the 79-residue chain is UPF0349 protein BCE_5075 (79 aa).

This sequence belongs to the UPF0349 family.

The polypeptide is UPF0349 protein BCE_5075 (Bacillus cereus (strain ATCC 10987 / NRS 248)).